The following is a 186-amino-acid chain: Elongation factor P (186 aa).

The protein belongs to the elongation factor P family.

Its subcellular location is the cytoplasm. It functions in the pathway protein biosynthesis; polypeptide chain elongation. In terms of biological role, involved in peptide bond synthesis. Stimulates efficient translation and peptide-bond synthesis on native or reconstituted 70S ribosomes in vitro. Probably functions indirectly by altering the affinity of the ribosome for aminoacyl-tRNA, thus increasing their reactivity as acceptors for peptidyl transferase. This Brucella ovis (strain ATCC 25840 / 63/290 / NCTC 10512) protein is Elongation factor P.